Here is a 287-residue protein sequence, read N- to C-terminus: MISSPKIKFGVHTFIWKKEFLGNEEYVFQDAKRWGFDGIEIATHYFDQIDPLQLKSYGEKYGVELTFCTSLPRGLSLTTKDEDCWRESIAYLERAIKFCQQCGIIQLSGPFPHPVGYLSGEPLQKRENVRMQEAFKLVAETLIKTDLKFAVEPLNRFQGYALNTVAQGLELLDAVDCPQLGLLLDLFHMNIEEKDVIKAFLQASNHCFHIHACAKDRGTPGSDSFAWGHWFKALQTMDYQGWVTIESFNFEDKELANGARLWRTVAPSNEALAQDGLKFLRQTYQTN.

Glutamate 152 (proton donor/acceptor) is an active-site residue. Glutamate 152 and aspartate 185 together coordinate Mn(2+). Position 188 (histidine 188) interacts with substrate. Residue histidine 211 coordinates Mn(2+). Arginine 217 is a substrate binding site. Catalysis depends on glutamate 246, which acts as the Proton donor/acceptor. Residue glutamate 246 participates in Mn(2+) binding.

It belongs to the hyi family. Mn(2+) serves as cofactor.

Probably catalyzes the epimerization of ketopentoses and/or ketohexoses at the C3 position. The chain is Probable ketose 3-epimerase from Synechocystis sp. (strain ATCC 27184 / PCC 6803 / Kazusa).